The following is a 460-amino-acid chain: MNLGDTIVAIASAVVPNQGSIGIVRLSGAAALPIARQLFQDPGQQTWESHRILYGYVRHPQTQTIVDEALLLLMLAPRSFTAEDVVEFHCHGGIIPVQQVLQLCLGAGARLATPGEFTLRAFLNGRIDLTQAESVAELVGAKSPQSAQVALAGIQGKLAQPIQQLRGQCLDILAEVEARIDFEDDLPPLDEPQIQRDLTQVLEKVAQILQTSDRGELLRTGLKVAIVGRPNVGKSSLLNAWSRSDRAIVTDLPGTTRDVVESQLVVQGIPVQVLDTAGIRDTEDAVEKIGVARSLAASQQADLILFTIDAAVGWTAADQEIFQRIVATKANQPLILILNKIDIGQPEAIEIPPQVQGVVKTAAAQHQGVDELETAIANLVQAGKVGAADLDFAINQRQAAALAQAQQALIQVRETIAQGLPLDFWTIDLRSAIQALGEITGEGVTESVLDRIFSRFCIGK.

The (6S)-5-formyl-5,6,7,8-tetrahydrofolate site is built by Arg-25, Glu-87, and Arg-126. Residues 221-381 (GLKVAIVGRP…LETAIANLVQ (161 aa)) enclose the TrmE-type G domain. Asn-231 contacts K(+). GTP contacts are provided by residues 231–236 (NVGKSS), 250–256 (TDLPGTT), and 275–278 (DTAG). Ser-235 provides a ligand contact to Mg(2+). Thr-250, Leu-252, and Thr-255 together coordinate K(+). Thr-256 contacts Mg(2+). Position 460 (Lys-460) interacts with (6S)-5-formyl-5,6,7,8-tetrahydrofolate.

Belongs to the TRAFAC class TrmE-Era-EngA-EngB-Septin-like GTPase superfamily. TrmE GTPase family. In terms of assembly, homodimer. Heterotetramer of two MnmE and two MnmG subunits. K(+) serves as cofactor.

The protein localises to the cytoplasm. In terms of biological role, exhibits a very high intrinsic GTPase hydrolysis rate. Involved in the addition of a carboxymethylaminomethyl (cmnm) group at the wobble position (U34) of certain tRNAs, forming tRNA-cmnm(5)s(2)U34. The polypeptide is tRNA modification GTPase MnmE (Picosynechococcus sp. (strain ATCC 27264 / PCC 7002 / PR-6) (Agmenellum quadruplicatum)).